The primary structure comprises 281 residues: Ribosomal RNA small subunit methyltransferase A (281 aa).

6 residues coordinate S-adenosyl-L-methionine: asparagine 24, leucine 26, glycine 51, glutamate 72, aspartate 96, and asparagine 123.

It belongs to the class I-like SAM-binding methyltransferase superfamily. rRNA adenine N(6)-methyltransferase family. RsmA subfamily.

Its subcellular location is the cytoplasm. It catalyses the reaction adenosine(1518)/adenosine(1519) in 16S rRNA + 4 S-adenosyl-L-methionine = N(6)-dimethyladenosine(1518)/N(6)-dimethyladenosine(1519) in 16S rRNA + 4 S-adenosyl-L-homocysteine + 4 H(+). Its function is as follows. Specifically dimethylates two adjacent adenosines (A1518 and A1519) in the loop of a conserved hairpin near the 3'-end of 16S rRNA in the 30S particle. May play a critical role in biogenesis of 30S subunits. The protein is Ribosomal RNA small subunit methyltransferase A of Ureaplasma urealyticum serovar 10 (strain ATCC 33699 / Western).